We begin with the raw amino-acid sequence, 396 residues long: Acetate kinase (396 aa).

Mg(2+) is bound at residue N7. Position 14 (K14) interacts with ATP. R86 provides a ligand contact to substrate. Catalysis depends on D143, which acts as the Proton donor/acceptor. ATP is bound by residues 203–207, 277–279, and 325–329; these read HLGNG, DMR, and GIGEH. Residue E380 coordinates Mg(2+).

Belongs to the acetokinase family. In terms of assembly, homodimer. Requires Mg(2+) as cofactor. Mn(2+) is required as a cofactor.

The protein localises to the cytoplasm. It catalyses the reaction acetate + ATP = acetyl phosphate + ADP. It participates in metabolic intermediate biosynthesis; acetyl-CoA biosynthesis; acetyl-CoA from acetate: step 1/2. Catalyzes the formation of acetyl phosphate from acetate and ATP. Can also catalyze the reverse reaction. The polypeptide is Acetate kinase (Sulfurovum sp. (strain NBC37-1)).